The chain runs to 485 residues: Mitochondrial metalloendopeptidase OMA1 (485 aa).

The transit peptide at methionine 1–phenylalanine 16 directs the protein to the mitochondrion. Residues alanine 17 to arginine 147 lie on the Mitochondrial matrix side of the membrane. Residues threonine 148–threonine 168 traverse the membrane as a helical segment. At glutamate 169–leucine 485 the chain is on the mitochondrial intermembrane side. Histidine 352 serves as a coordination point for Zn(2+). The active site involves glutamate 353. Residues histidine 356 and glutamate 405 each contribute to the Zn(2+) site. The required for protease activation stretch occupies residues lysine 456–leucine 485.

The protein belongs to the peptidase M48A family. As to quaternary structure, homooligomer. Zn(2+) serves as cofactor.

It localises to the mitochondrion inner membrane. In terms of biological role, protease that is part of the quality control system in the inner membrane of mitochondria. Metalloendopeptidase that modulates the oxidative phosphorylation (OXPHOS) system and plant growth. Involved in tolerance mechanisms to heat, osmotic and oxidative stresses. The sequence is that of Mitochondrial metalloendopeptidase OMA1 from Arabidopsis thaliana (Mouse-ear cress).